Reading from the N-terminus, the 287-residue chain is GTPase Era (287 aa).

An Era-type G domain is found at 11 to 174; the sequence is RSGFVAVIGR…RSYLASSLPE (164 aa). GTP contacts are provided by residues 19–26 and 66–70; these read GRTNVGKS and DTPGI. Positions 205-273 constitute a KH type-2 domain; sequence LRDELPQALA…PLTLRVKVQR (69 aa).

This sequence belongs to the TRAFAC class TrmE-Era-EngA-EngB-Septin-like GTPase superfamily. Era GTPase family. In terms of assembly, monomer.

The protein localises to the cytoplasm. It is found in the cell membrane. Functionally, an essential GTPase that binds both GDP and GTP, with rapid nucleotide exchange. Plays a role in 16S rRNA processing and 30S ribosomal subunit biogenesis and possibly also in cell cycle regulation and energy metabolism. This Acidimicrobium ferrooxidans (strain DSM 10331 / JCM 15462 / NBRC 103882 / ICP) protein is GTPase Era.